A 154-amino-acid polypeptide reads, in one-letter code: 6,7-dimethyl-8-ribityllumazine synthase (154 aa).

Residues tryptophan 23, 57-59 (AFE), and 81-83 (AVI) contribute to the 5-amino-6-(D-ribitylamino)uracil site. 86-87 (AT) is a (2S)-2-hydroxy-3-oxobutyl phosphate binding site. Histidine 89 (proton donor) is an active-site residue. Phenylalanine 114 serves as a coordination point for 5-amino-6-(D-ribitylamino)uracil. Arginine 128 is a binding site for (2S)-2-hydroxy-3-oxobutyl phosphate.

The protein belongs to the DMRL synthase family.

It carries out the reaction (2S)-2-hydroxy-3-oxobutyl phosphate + 5-amino-6-(D-ribitylamino)uracil = 6,7-dimethyl-8-(1-D-ribityl)lumazine + phosphate + 2 H2O + H(+). It functions in the pathway cofactor biosynthesis; riboflavin biosynthesis; riboflavin from 2-hydroxy-3-oxobutyl phosphate and 5-amino-6-(D-ribitylamino)uracil: step 1/2. Functionally, catalyzes the formation of 6,7-dimethyl-8-ribityllumazine by condensation of 5-amino-6-(D-ribitylamino)uracil with 3,4-dihydroxy-2-butanone 4-phosphate. This is the penultimate step in the biosynthesis of riboflavin. This Sulfurimonas denitrificans (strain ATCC 33889 / DSM 1251) (Thiomicrospira denitrificans (strain ATCC 33889 / DSM 1251)) protein is 6,7-dimethyl-8-ribityllumazine synthase.